Here is a 288-residue protein sequence, read N- to C-terminus: Probable proteasome subunit alpha type-7 (288 aa).

Thr2 is modified (N-acetylthreonine). A disordered region spans residues 247–288 (INGDDDEDEDDSDNVMSSDDENAPVATNANATTDQEGDIHLE). Residues 249–268 (GDDDEDEDDSDNVMSSDDEN) show a composition bias toward acidic residues. The span at 269–279 (APVATNANATT) shows a compositional bias: low complexity.

The protein belongs to the peptidase T1A family. The 26S proteasome consists of a 20S proteasome core and two 19S regulatory subunits. The 20S proteasome core is composed of 28 subunits that are arranged in four stacked rings, resulting in a barrel-shaped structure. The two end rings are each formed by seven alpha subunits, and the two central rings are each formed by seven beta subunits. The catalytic chamber with the active sites is on the inside of the barrel. Post-translationally, the alpha and beta forms are probably products of the same gene with different post-translational modifications.

It localises to the cytoplasm. The protein localises to the nucleus. In terms of biological role, the proteasome degrades poly-ubiquitinated proteins in the cytoplasm and in the nucleus. It is essential for the regulated turnover of proteins and for the removal of misfolded proteins. The proteasome is a multicatalytic proteinase complex that is characterized by its ability to cleave peptides with Arg, Phe, Tyr, Leu, and Glu adjacent to the leaving group at neutral or slightly basic pH. It has an ATP-dependent proteolytic activity. This is Probable proteasome subunit alpha type-7 (PRE10) from Saccharomyces cerevisiae (strain ATCC 204508 / S288c) (Baker's yeast).